A 104-amino-acid chain; its full sequence is Cell division protein FtsB (104 aa).

Topologically, residues 1–3 (MGK) are cytoplasmic. A helical membrane pass occupies residues 4–21 (LTLLLLVLLGWLQYSLWL). At 22–104 (GKNGIHDYTR…NAQQGRPASQ (83 aa)) the chain is on the periplasmic side. Positions 33-62 (DEDVASQQGNNAKLKARNDRLFAEIDDLNG) form a coiled coil.

It belongs to the FtsB family. Part of a complex composed of FtsB, FtsL and FtsQ.

It is found in the cell inner membrane. In terms of biological role, essential cell division protein. May link together the upstream cell division proteins, which are predominantly cytoplasmic, with the downstream cell division proteins, which are predominantly periplasmic. The protein is Cell division protein FtsB of Erwinia tasmaniensis (strain DSM 17950 / CFBP 7177 / CIP 109463 / NCPPB 4357 / Et1/99).